We begin with the raw amino-acid sequence, 284 residues long: 2-dehydro-3-deoxyphosphooctonate aldolase (284 aa).

It belongs to the KdsA family.

The protein resides in the cytoplasm. It carries out the reaction D-arabinose 5-phosphate + phosphoenolpyruvate + H2O = 3-deoxy-alpha-D-manno-2-octulosonate-8-phosphate + phosphate. Its pathway is carbohydrate biosynthesis; 3-deoxy-D-manno-octulosonate biosynthesis; 3-deoxy-D-manno-octulosonate from D-ribulose 5-phosphate: step 2/3. The protein operates within bacterial outer membrane biogenesis; lipopolysaccharide biosynthesis. This is 2-dehydro-3-deoxyphosphooctonate aldolase from Vibrio vulnificus (strain CMCP6).